Here is a 149-residue protein sequence, read N- to C-terminus: Large ribosomal subunit protein bL9 (149 aa).

Belongs to the bacterial ribosomal protein bL9 family.

Its function is as follows. Binds to the 23S rRNA. This Ligilactobacillus salivarius (strain UCC118) (Lactobacillus salivarius) protein is Large ribosomal subunit protein bL9.